A 241-amino-acid polypeptide reads, in one-letter code: Uridylate kinase (241 aa).

15–18 contributes to the ATP binding site; sequence KLSG. An involved in allosteric activation by GTP region spans residues 23–28; it reads GSEGFG. UMP is bound at residue Gly57. ATP is bound by residues Gly58 and Arg62. Residues Asp77 and 138–145 contribute to the UMP site; that span reads TGNPFFTT. Thr165, Phe171, and Asp174 together coordinate ATP.

It belongs to the UMP kinase family. As to quaternary structure, homohexamer.

The protein resides in the cytoplasm. It catalyses the reaction UMP + ATP = UDP + ADP. It functions in the pathway pyrimidine metabolism; CTP biosynthesis via de novo pathway; UDP from UMP (UMPK route): step 1/1. With respect to regulation, allosterically activated by GTP. Inhibited by UTP. Its function is as follows. Catalyzes the reversible phosphorylation of UMP to UDP. This Klebsiella pneumoniae subsp. pneumoniae (strain ATCC 700721 / MGH 78578) protein is Uridylate kinase.